Consider the following 202-residue polypeptide: NADH:(hydroxy)cinnamate reductase subunit CrdA (202 aa).

The protein belongs to the NADH-dependent flavin reductase family. As to quaternary structure, NADH:(hydroxy)cinnamate reductase Crd is a heterodimer composed of CrdA and CrdB subunits, encoded by adjacent genes. FMN is required as a cofactor.

Functionally, component of the NADH:(hydroxy)cinnamate reductase. CrdA is probably reduced by NADH and then transfers the electrons to the catalytic center of CrdB. Is likely involved in protecting V.ruber from (hydroxy)cinnamate poisoning. This Vibrio ruber (strain DSM 16370 / JCM 11486 / BCRC 17186 / CECT 7878 / LMG 23124 / VR1) protein is NADH:(hydroxy)cinnamate reductase subunit CrdA.